Reading from the N-terminus, the 100-residue chain is Small ribosomal subunit protein uS14c (100 aa).

The protein belongs to the universal ribosomal protein uS14 family. In terms of assembly, part of the 30S ribosomal subunit.

Its subcellular location is the plastid. The protein localises to the chloroplast. Functionally, binds 16S rRNA, required for the assembly of 30S particles. This chain is Small ribosomal subunit protein uS14c, found in Carica papaya (Papaya).